Here is a 183-residue protein sequence, read N- to C-terminus: MDNNKKKDFFYFKPSEEIEEEIIDCFMENPVDENMFNQQQQQLQNNHENLEINEEYHQTINEMEDMIFTYSNTNISNDTNLSDNNVSDLIKLEIYNSNNINNNIYNTNNSNTNTNYNNNNNNNNNNNNNNNNNNNKNNNNNNNNNNSNSKIKRRNSIILDNVGTIIRIDTTNISSTKKRRIFK.

Positions 105–149 are enriched in low complexity; that stretch reads YNTNNSNTNTNYNNNNNNNNNNNNNNNNNNNKNNNNNNNNNNSNS. Positions 105–151 are disordered; sequence YNTNNSNTNTNYNNNNNNNNNNNNNNNNNNNKNNNNNNNNNNSNSKI.

This is an uncharacterized protein from Dictyostelium discoideum (Social amoeba).